Consider the following 535-residue polypeptide: Probable histone-arginine methyltransferase 1.3 (535 aa).

At Met-1 the chain carries N-acetylmethionine. Residues 141-456 (EASSAKMYFH…QSYTIDLTLS (316 aa)) enclose the SAM-dependent MTase PRMT-type domain. Positions 158, 167, 191, 213, and 243 each coordinate S-adenosyl-L-methionine. Catalysis depends on residues Glu-257 and Glu-266. An S-adenosyl-L-methionine-binding site is contributed by Ser-271. The interval 494-517 (VAQEPPLQPQPELSTQQDIQTPND) is disordered. Polar residues predominate over residues 507-516 (STQQDIQTPN).

This sequence belongs to the class I-like SAM-binding methyltransferase superfamily. Protein arginine N-methyltransferase family. In terms of assembly, interacts with PQT3 in the nucleus. In terms of processing, ubiquitinated by PQT3.

The protein resides in the nucleus. Its subcellular location is the cytoplasm. It catalyses the reaction L-arginyl-[protein] + 2 S-adenosyl-L-methionine = N(omega),N(omega)-dimethyl-L-arginyl-[protein] + 2 S-adenosyl-L-homocysteine + 2 H(+). In terms of biological role, methylates (mono- and asymmetric dimethylation) the guanidino nitrogens of arginyl residues in several proteins involved in DNA packaging, transcription regulation, and mRNA stability. Recruited to promoters upon gene activation, methylates histone H3 and activates transcription via chromatin remodeling. Positive regulator in the oxidative stress tolerance that promotes the expression of enzymes preventing oxidative stress such as APX1 and GPX1 by histone methylation (H3R17me2a). Confers tolerance to cadmium CdCl(2) and salt NaCl stresses. This chain is Probable histone-arginine methyltransferase 1.3 (PRMT13), found in Arabidopsis thaliana (Mouse-ear cress).